A 203-amino-acid chain; its full sequence is FMN-dependent NADH:quinone oxidoreductase (203 aa).

Residues Ser-9 and 15 to 17 (SKS) contribute to the FMN site.

The protein belongs to the azoreductase type 1 family. As to quaternary structure, homodimer. It depends on FMN as a cofactor.

The enzyme catalyses 2 a quinone + NADH + H(+) = 2 a 1,4-benzosemiquinone + NAD(+). The catalysed reaction is N,N-dimethyl-1,4-phenylenediamine + anthranilate + 2 NAD(+) = 2-(4-dimethylaminophenyl)diazenylbenzoate + 2 NADH + 2 H(+). Functionally, quinone reductase that provides resistance to thiol-specific stress caused by electrophilic quinones. Its function is as follows. Also exhibits azoreductase activity. Catalyzes the reductive cleavage of the azo bond in aromatic azo compounds to the corresponding amines. The polypeptide is FMN-dependent NADH:quinone oxidoreductase (Bordetella avium (strain 197N)).